A 333-amino-acid polypeptide reads, in one-letter code: Trans-1,2-dihydrobenzene-1,2-diol dehydrogenase (333 aa).

The protein belongs to the Gfo/Idh/MocA family. Homodimer.

It catalyses the reaction (1R,2R)-1,2-dihydrobenzene-1,2-diol + NADP(+) = catechol + NADPH + H(+). It carries out the reaction D-xylose + NADP(+) = D-xylono-1,5-lactone + NADPH + H(+). This Mus musculus (Mouse) protein is Trans-1,2-dihydrobenzene-1,2-diol dehydrogenase (Dhdh).